Reading from the N-terminus, the 196-residue chain is Pyridoxal 5'-phosphate synthase subunit PdxT (196 aa).

46–48 provides a ligand contact to L-glutamine; it reads GES. The Nucleophile role is filled by Cys78. Residues Arg105 and 134–135 contribute to the L-glutamine site; that span reads IR. Residues His170 and Glu172 each act as charge relay system in the active site.

Belongs to the glutaminase PdxT/SNO family. As to quaternary structure, in the presence of PdxS, forms a dodecamer of heterodimers. Only shows activity in the heterodimer.

The enzyme catalyses aldehydo-D-ribose 5-phosphate + D-glyceraldehyde 3-phosphate + L-glutamine = pyridoxal 5'-phosphate + L-glutamate + phosphate + 3 H2O + H(+). It carries out the reaction L-glutamine + H2O = L-glutamate + NH4(+). It functions in the pathway cofactor biosynthesis; pyridoxal 5'-phosphate biosynthesis. In terms of biological role, catalyzes the hydrolysis of glutamine to glutamate and ammonia as part of the biosynthesis of pyridoxal 5'-phosphate. The resulting ammonia molecule is channeled to the active site of PdxS. This is Pyridoxal 5'-phosphate synthase subunit PdxT from Pelotomaculum thermopropionicum (strain DSM 13744 / JCM 10971 / SI).